A 433-amino-acid polypeptide reads, in one-letter code: Enolase (433 aa).

Gln166 contacts (2R)-2-phosphoglycerate. Glu208 functions as the Proton donor in the catalytic mechanism. Residues Asp245, Glu289, and Asp316 each contribute to the Mg(2+) site. 4 residues coordinate (2R)-2-phosphoglycerate: Lys341, Arg370, Ser371, and Lys392. Lys341 serves as the catalytic Proton acceptor.

The protein belongs to the enolase family. The cofactor is Mg(2+).

It is found in the cytoplasm. It localises to the secreted. The protein localises to the cell surface. It catalyses the reaction (2R)-2-phosphoglycerate = phosphoenolpyruvate + H2O. It functions in the pathway carbohydrate degradation; glycolysis; pyruvate from D-glyceraldehyde 3-phosphate: step 4/5. Catalyzes the reversible conversion of 2-phosphoglycerate (2-PG) into phosphoenolpyruvate (PEP). It is essential for the degradation of carbohydrates via glycolysis. In Acetivibrio thermocellus (strain ATCC 27405 / DSM 1237 / JCM 9322 / NBRC 103400 / NCIMB 10682 / NRRL B-4536 / VPI 7372) (Clostridium thermocellum), this protein is Enolase.